Reading from the N-terminus, the 95-residue chain is Signal recognition particle 19 kDa protein (95 aa).

This sequence belongs to the SRP19 family. As to quaternary structure, part of the signal recognition particle protein translocation system, which is composed of SRP and FtsY. Archaeal SRP consists of a 7S RNA molecule of 300 nucleotides and two protein subunits: SRP54 and SRP19.

It localises to the cytoplasm. Functionally, involved in targeting and insertion of nascent membrane proteins into the cytoplasmic membrane. Binds directly to 7S RNA and mediates binding of the 54 kDa subunit of the SRP. The polypeptide is Signal recognition particle 19 kDa protein (Desulfurococcus amylolyticus (strain DSM 18924 / JCM 16383 / VKM B-2413 / 1221n) (Desulfurococcus kamchatkensis)).